The sequence spans 235 residues: Probable transcriptional regulatory protein Cj1172c (235 aa).

It belongs to the TACO1 family.

Its subcellular location is the cytoplasm. In Campylobacter jejuni subsp. jejuni serotype O:2 (strain ATCC 700819 / NCTC 11168), this protein is Probable transcriptional regulatory protein Cj1172c.